The sequence spans 156 residues: Small ribosomal subunit protein uS7 (156 aa).

The protein belongs to the universal ribosomal protein uS7 family. In terms of assembly, part of the 30S ribosomal subunit. Contacts proteins S9 and S11.

Its function is as follows. One of the primary rRNA binding proteins, it binds directly to 16S rRNA where it nucleates assembly of the head domain of the 30S subunit. Is located at the subunit interface close to the decoding center, probably blocks exit of the E-site tRNA. This Lactobacillus johnsonii (strain CNCM I-12250 / La1 / NCC 533) protein is Small ribosomal subunit protein uS7.